The chain runs to 406 residues: Succinylornithine transaminase (406 aa).

Residue Lys-252 is modified to N6-(pyridoxal phosphate)lysine.

The protein belongs to the class-III pyridoxal-phosphate-dependent aminotransferase family. AstC subfamily. Pyridoxal 5'-phosphate is required as a cofactor.

The enzyme catalyses N(2)-succinyl-L-ornithine + 2-oxoglutarate = N-succinyl-L-glutamate 5-semialdehyde + L-glutamate. It functions in the pathway amino-acid degradation; L-arginine degradation via AST pathway; L-glutamate and succinate from L-arginine: step 3/5. In terms of biological role, catalyzes the transamination of N(2)-succinylornithine and alpha-ketoglutarate into N(2)-succinylglutamate semialdehyde and glutamate. Can also act as an acetylornithine aminotransferase. The polypeptide is Succinylornithine transaminase (Escherichia coli O45:K1 (strain S88 / ExPEC)).